A 257-amino-acid chain; its full sequence is Dihydroorotate dehydrogenase B (NAD(+)), electron transfer subunit (257 aa).

Residues 2-102 enclose the FAD-binding FR-type domain; it reads IGRERMTVVS…LGPLGHGFPL (101 aa). FAD-binding positions include 53 to 56, 70 to 72, and 77 to 78; these read RPLS, IYR, and GT. Positions 221, 226, 229, and 244 each coordinate [2Fe-2S] cluster.

It belongs to the PyrK family. In terms of assembly, heterotetramer of 2 PyrK and 2 PyrD type B subunits. [2Fe-2S] cluster serves as cofactor. FAD is required as a cofactor.

It functions in the pathway pyrimidine metabolism; UMP biosynthesis via de novo pathway; orotate from (S)-dihydroorotate (NAD(+) route): step 1/1. Responsible for channeling the electrons from the oxidation of dihydroorotate from the FMN redox center in the PyrD type B subunit to the ultimate electron acceptor NAD(+). This Geobacillus thermodenitrificans (strain NG80-2) protein is Dihydroorotate dehydrogenase B (NAD(+)), electron transfer subunit.